Here is a 307-residue protein sequence, read N- to C-terminus: Taste receptor type 2 member 41 (307 aa).

At 1-7 (MQAALMA) the chain is on the extracellular side. The chain crosses the membrane as a helical span at residues 8 to 28 (FFMLLFSLLSLLGIAANGFIV). Residues 29–40 (LVLGREWLRYGR) lie on the Cytoplasmic side of the membrane. The chain crosses the membrane as a helical span at residues 41-61 (LLPLDMILISLGASRXCLQLV). The Extracellular segment spans residues 62–88 (GTVHNFYYSARKVEYSGGLGRQFFHLH). Residues 89–109 (WHFLNSATFWFCSWLSVLFCV) traverse the membrane as a helical segment. Topologically, residues 110-129 (KIANITHPTFLWLKWRFPGW) are cytoplasmic. A helical membrane pass occupies residues 130-150 (VPWLLLGSVLISFIITLLFFW). The Extracellular segment spans residues 151 to 183 (VNYPVYQELLIRKFSGNMTYKWNTRIETYYFPS). N-linked (GlcNAc...) asparagine glycosylation is present at Asn-167. The helical transmembrane segment at 184–204 (LKLVIWSIPFSVFLVSIMLLI) threads the bilayer. Residues 205 to 234 (NSLRRHTQRMQHNGHSLQDPSTQAHTRALK) are Cytoplasmic-facing. A helical membrane pass occupies residues 235–255 (SLISFLFLYALSFLSLIIDAT). The Extracellular portion of the chain corresponds to 256–264 (KFISMQNDF). Residues 265-285 (YWPWQIAVYLCISVHPFILIF) traverse the membrane as a helical segment. Over 286 to 307 (SNLKLRSMFWQVLLLARGFWVA) the chain is Cytoplasmic.

The protein belongs to the G-protein coupled receptor T2R family.

It is found in the membrane. In terms of biological role, receptor that may play a role in the perception of bitterness and is gustducin-linked. May play a role in sensing the chemical composition of the gastrointestinal content. The activity of this receptor may stimulate alpha gustducin, mediate PLC-beta-2 activation and lead to the gating of TRPM5. This is Taste receptor type 2 member 41 (TAS2R41) from Gorilla gorilla gorilla (Western lowland gorilla).